The primary structure comprises 139 residues: Drosulfakinins (139 aa).

The N-terminal stretch at 1-35 (MGHRGMGCAHFATMAMPLWALTFYLLVVLPVPSQT) is a signal peptide. Residues 36-71 (ASVEVGKEERRLQDLDPKMGSEAGNTDGLSLARFGS) constitute a propeptide that is removed on maturation. The residue at position 80 (Phe80) is a Phenylalanine amide. A propeptide spanning residues 81–109 (GHRVPIISRPVIPIELDLLMDNEDDRTMS) is cleaved from the precursor. Tyr115 is modified (sulfotyrosine). Phe120 is subject to Phenylalanine amide. Tyr132 bears the Sulfotyrosine mark. Phe137 carries the post-translational modification Phenylalanine amide.

It belongs to the gastrin/cholecystokinin family.

The protein localises to the secreted. Drosulfakinin-0 (DSK 0) plays diverse biological roles including regulating gut muscle contraction in adults but not in larvae. The polypeptide is Drosulfakinins (Drosophila pseudoobscura pseudoobscura (Fruit fly)).